Consider the following 257-residue polypeptide: Na(+)-translocating NADH-quinone reductase subunit C (257 aa).

A helical transmembrane segment spans residues 12–32 (LFVVIALSLVCSIIVSAAAVG). The residue at position 225 (Thr225) is an FMN phosphoryl threonine.

It belongs to the NqrC family. As to quaternary structure, composed of six subunits; NqrA, NqrB, NqrC, NqrD, NqrE and NqrF. The cofactor is FMN.

Its subcellular location is the cell inner membrane. The catalysed reaction is a ubiquinone + n Na(+)(in) + NADH + H(+) = a ubiquinol + n Na(+)(out) + NAD(+). Functionally, NQR complex catalyzes the reduction of ubiquinone-1 to ubiquinol by two successive reactions, coupled with the transport of Na(+) ions from the cytoplasm to the periplasm. NqrA to NqrE are probably involved in the second step, the conversion of ubisemiquinone to ubiquinol. The polypeptide is Na(+)-translocating NADH-quinone reductase subunit C (Vibrio cholerae serotype O1 (strain ATCC 39541 / Classical Ogawa 395 / O395)).